A 331-amino-acid chain; its full sequence is MKIRCDVCDKEEASVFCTADEASLCGGCDHQVHHANKLASKHLRFSLLYPSSSNTSSPLCDICQDKKALLFCQQDRAILCKDCDSSIHAANEHTKKHDRFLLTGVKLSATSSVYKPTSKSSSSSSSNQDFSVPGSSISNPPPLKKPLSAPPQSNKIQPFSKINGGDASVNQWGSTSTISEYLMDTLPGWHVEDFLDSSLPTYGFSKSGDDDGVLPYMEPEDDNNTKRNNNNNNNNNNNTVSLPSKNLGIWVPQIPQTLPSSYPNQYFSQDNNIQFGMYNKETSPEVVSFAPIQNMKQQGQNNKRWYDDGGFTVPQITPPPLSSNKKFRSFW.

8 residues coordinate Zn(2+): cysteine 5, cysteine 8, cysteine 28, histidine 34, cysteine 60, cysteine 63, cysteine 83, and histidine 93. A B box-type 1; atypical zinc finger spans residues 5-47 (CDVCDKEEASVFCTADEASLCGGCDHQVHHANKLASKHLRFSL). The segment at 60–102 (CDICQDKKALLFCQQDRAILCKDCDSSIHAANEHTKKHDRFLL) adopts a B box-type 2; atypical zinc-finger fold. Low complexity-rich tracts occupy residues 115 to 126 (KPTSKSSSSSSS) and 228 to 238 (NNNNNNNNNNN). Disordered stretches follow at residues 115-167 (KPTS…GGDA) and 209-241 (DDDG…NTVS).

In terms of assembly, interacts with COP1, HY5 and BBX32. Interacts with FLZ1.

It is found in the nucleus. Transcription activator that acts as a positive regulator of seedling photomorphogenesis. Acts downstream of COP1 and play an important role in early and long-term adjustment of the shade avoidance syndrome (SAS) responses in natural environments. In Arabidopsis thaliana (Mouse-ear cress), this protein is B-box zinc finger protein 21.